The following is a 152-amino-acid chain: Methylglyoxal synthase (152 aa).

In terms of domain architecture, MGS-like spans 6–152 (RTIPAQKHIA…YQRYLQDRLK (147 aa)). Residues H19, K23, 45–48 (TGTT), and 65–66 (SG) each bind substrate. D71 (proton donor/acceptor) is an active-site residue. H98 is a binding site for substrate.

Belongs to the methylglyoxal synthase family.

It carries out the reaction dihydroxyacetone phosphate = methylglyoxal + phosphate. In terms of biological role, catalyzes the formation of methylglyoxal from dihydroxyacetone phosphate. The sequence is that of Methylglyoxal synthase from Pectobacterium atrosepticum (strain SCRI 1043 / ATCC BAA-672) (Erwinia carotovora subsp. atroseptica).